The primary structure comprises 310 residues: tRNA pseudouridine synthase B (310 aa).

Catalysis depends on Asp-49, which acts as the Nucleophile.

The protein belongs to the pseudouridine synthase TruB family. Type 1 subfamily.

The enzyme catalyses uridine(55) in tRNA = pseudouridine(55) in tRNA. Responsible for synthesis of pseudouridine from uracil-55 in the psi GC loop of transfer RNAs. The protein is tRNA pseudouridine synthase B of Sinorhizobium medicae (strain WSM419) (Ensifer medicae).